A 279-amino-acid chain; its full sequence is Undecaprenyl-diphosphatase (279 aa).

7 consecutive transmembrane segments (helical) span residues 10 to 30, 48 to 68, 96 to 116, 128 to 148, 203 to 223, 229 to 249, and 259 to 279; these read FICF…FLPI, LGVS…IYYF, LFLY…LIKL, GLFS…LSEI, SFLV…FSLF, IDII…IFAI, and NNTL…LTTL.

Belongs to the UppP family.

The protein resides in the cell inner membrane. The catalysed reaction is di-trans,octa-cis-undecaprenyl diphosphate + H2O = di-trans,octa-cis-undecaprenyl phosphate + phosphate + H(+). Functionally, catalyzes the dephosphorylation of undecaprenyl diphosphate (UPP). Confers resistance to bacitracin. The chain is Undecaprenyl-diphosphatase from Prochlorococcus marinus (strain NATL2A).